Reading from the N-terminus, the 250-residue chain is 2,5-dichloro-2,5-cyclohexadiene-1,4-diol dehydrogenase (250 aa).

Residue 9-34 (IIVTGGGSGIGRATVELLVASGANVA) participates in NAD(+) binding. Serine 141 serves as a coordination point for substrate. Tyrosine 154 functions as the Proton acceptor in the catalytic mechanism.

It belongs to the short-chain dehydrogenases/reductases (SDR) family.

It catalyses the reaction 2,5-dichlorocyclohexa-2,5-dien-1,4-diol + NAD(+) = 2,5-dichlorohydroquinone + NADH + H(+). The protein operates within xenobiotic degradation; gamma-hexachlorocyclohexane degradation. Catalyzes the dehydrogenation of 2,5-dichloro-2,5-cyclohexadiene-1,4-diol (2,5-DDOL) to 2,5-dichlorohydroquinone (2,5-DCHQ), a step in the degradation of gamma-hexachlorocyclohexane (gamma-HCH or lindane). Has an essential role in this assimilation pathway that allows S.japonicum UT26 to grow on gamma-HCH as the sole source of carbon and energy. This is 2,5-dichloro-2,5-cyclohexadiene-1,4-diol dehydrogenase from Sphingobium indicum (strain DSM 16413 / CCM 7287 / MTCC 6362 / UT26 / NBRC 101211 / UT26S) (Sphingobium japonicum).